Reading from the N-terminus, the 138-residue chain is ATP synthase epsilon chain (138 aa).

A disordered region spans residues 88-119; the sequence is DREEARSTLSAAQARLDQSEQSEDKQERYEAQ. A compositionally biased stretch (basic and acidic residues) spans 109-119; it reads SEDKQERYEAQ.

Belongs to the ATPase epsilon chain family. F-type ATPases have 2 components, CF(1) - the catalytic core - and CF(0) - the membrane proton channel. CF(1) has five subunits: alpha(3), beta(3), gamma(1), delta(1), epsilon(1). CF(0) has three main subunits: a, b and c.

Its subcellular location is the cellular thylakoid membrane. Functionally, produces ATP from ADP in the presence of a proton gradient across the membrane. The sequence is that of ATP synthase epsilon chain from Acaryochloris marina (strain MBIC 11017).